The primary structure comprises 343 residues: Malate dehydrogenase, peroxisomal (343 aa).

Residues 8–14 (GASGGVG) and D34 contribute to the NAD(+) site. 2 residues coordinate substrate: R80 and R86. NAD(+) contacts are provided by residues N93 and 116 to 118 (ISN). Substrate-binding residues include N118 and R152. H187 functions as the Proton acceptor in the catalytic mechanism. M237 serves as a coordination point for NAD(+).

The protein belongs to the LDH/MDH superfamily. MDH type 1 family. As to quaternary structure, homodimer.

It localises to the peroxisome. It catalyses the reaction (S)-malate + NAD(+) = oxaloacetate + NADH + H(+). The sequence is that of Malate dehydrogenase, peroxisomal (MDH3) from Saccharomyces cerevisiae (strain ATCC 204508 / S288c) (Baker's yeast).